The sequence spans 216 residues: Probable GTP-binding protein EngB (216 aa).

In terms of domain architecture, EngB-type G spans 26–210; that stretch reads PMATIIFAGR…KNRIFEVIRE (185 aa). GTP-binding positions include 34 to 41, 59 to 63, 76 to 79, 156 to 159, and 189 to 191; these read GRSNVGKS, GVTRK, DMPG, NKLD, and ISA. Residues Ser41 and Thr61 each coordinate Mg(2+).

The protein belongs to the TRAFAC class TrmE-Era-EngA-EngB-Septin-like GTPase superfamily. EngB GTPase family. It depends on Mg(2+) as a cofactor.

Necessary for normal cell division and for the maintenance of normal septation. The chain is Probable GTP-binding protein EngB from Pyrococcus horikoshii (strain ATCC 700860 / DSM 12428 / JCM 9974 / NBRC 100139 / OT-3).